The primary structure comprises 405 residues: Phosphopentomutase (405 aa).

Mn(2+)-binding residues include D10, D297, H302, D338, H339, and H350.

The protein belongs to the phosphopentomutase family. Mn(2+) is required as a cofactor.

The protein localises to the cytoplasm. The catalysed reaction is 2-deoxy-alpha-D-ribose 1-phosphate = 2-deoxy-D-ribose 5-phosphate. It carries out the reaction alpha-D-ribose 1-phosphate = D-ribose 5-phosphate. It functions in the pathway carbohydrate degradation; 2-deoxy-D-ribose 1-phosphate degradation; D-glyceraldehyde 3-phosphate and acetaldehyde from 2-deoxy-alpha-D-ribose 1-phosphate: step 1/2. Its function is as follows. Isomerase that catalyzes the conversion of deoxy-ribose 1-phosphate (dRib-1-P) and ribose 1-phosphate (Rib-1-P) to deoxy-ribose 5-phosphate (dRib-5-P) and ribose 5-phosphate (Rib-5-P), respectively. This is Phosphopentomutase from Pseudoalteromonas translucida (strain TAC 125).